The primary structure comprises 166 residues: Phosphopantetheine adenylyltransferase (166 aa).

Serine 9 is a binding site for substrate. Residues serine 9 to phenylalanine 10 and histidine 17 contribute to the ATP site. Substrate is bound by residues lysine 41, leucine 74, and lysine 88. ATP contacts are provided by residues glycine 89–arginine 91, glutamate 99, and tyrosine 123–threonine 129.

It belongs to the bacterial CoaD family. Homohexamer. The cofactor is Mg(2+).

The protein resides in the cytoplasm. The enzyme catalyses (R)-4'-phosphopantetheine + ATP + H(+) = 3'-dephospho-CoA + diphosphate. The protein operates within cofactor biosynthesis; coenzyme A biosynthesis; CoA from (R)-pantothenate: step 4/5. In terms of biological role, reversibly transfers an adenylyl group from ATP to 4'-phosphopantetheine, yielding dephospho-CoA (dPCoA) and pyrophosphate. The chain is Phosphopantetheine adenylyltransferase from Paenarthrobacter aurescens (strain TC1).